Consider the following 473-residue polypeptide: DNA-binding protein (473 aa).

Disordered regions lie at residues 1–69 (MAGR…GFSH) and 85–111 (RRLE…SKAV). Polar residues predominate over residues 7–18 (ELPTITPYLQET). Positions 53-62 (PDSEEEEEEV) are enriched in acidic residues. At Y141 the chain carries Phosphotyrosine; by host. Residues C230 and H232 each contribute to the Zn(2+) site. A flexible loop region spans residues 243–277 (VEMDVASENAQRALKEHPSRAKVVQNRWGRSVVQL). C285, C301, C342, C344, C396, and C412 together coordinate Zn(2+). The segment at 459-473 (VALPASHGDGEKEPF) is C-terminal arm, DBP binding.

Belongs to the adenoviridae E2A DNA-binding protein family. Homomultimerizes on viral ssDNA bound to pTP. Forms a initiation complex with viral polymerase, pTP and hosts NFIA and POU2F1/OCT1. Interacts with host SRCAP.

It localises to the host nucleus. Its function is as follows. Plays a role in the elongation phase of viral strand displacement replication by unwinding the template in an ATP-independent fashion, employing its capacity to form multimers. Also enhances the rate of initiation. Released from template upon second strand synthesis. Assembles in complex with viral pTP, viral pol, host NFIA and host POU2F1/OCT1 on viral origin of replication. Covers the whole ssDNA genome during synthesis. The complementary strand synthesis induces its relese from DNA template. May inhibit cellular transcription mediated by the interaction between host SRCAP and CBP. This chain is DNA-binding protein, found in Homo sapiens (Human).